The following is a 73-amino-acid chain: Conotoxin Im14.3 (73 aa).

Residues 1 to 17 (MGVFRCCLAAALVVVCL) form the signal peptide. Positions 18–35 (SRMGGTEPLESNHEDERR) are excised as a propeptide. Residues 22–42 (GTEPLESNHEDERRADDTSGD) form a disordered region. Residues 27 to 38 (ESNHEDERRADD) are compositionally biased toward basic and acidic residues. The 30-residue stretch at 44-73 (CVDTNEDCVNWASTGQCEANPSYMRENCRK) folds into the ShKT domain.

Post-translationally, contain 2 disulfide bonds. As to expression, expressed by the venom duct.

The protein localises to the secreted. Its function is as follows. Probable neurotoxin. The chain is Conotoxin Im14.3 from Conus imperialis (Imperial cone).